The primary structure comprises 187 residues: Elongation factor P (187 aa).

This sequence belongs to the elongation factor P family.

The protein localises to the cytoplasm. Its pathway is protein biosynthesis; polypeptide chain elongation. Functionally, involved in peptide bond synthesis. Stimulates efficient translation and peptide-bond synthesis on native or reconstituted 70S ribosomes in vitro. Probably functions indirectly by altering the affinity of the ribosome for aminoacyl-tRNA, thus increasing their reactivity as acceptors for peptidyl transferase. The polypeptide is Elongation factor P (Mycobacterium marinum (strain ATCC BAA-535 / M)).